Reading from the N-terminus, the 155-residue chain is MSQVILDLQLACEDNSGLPEESQFQTWLNAVIPQFQEESEVTIRVVDTAESHSLNLIYRGKDKPTNVLSFPFEVPPGMEMSLLGDLVICRQVVEKEAQEQGKPLEAHWAHMVVHGSLHLLGYDHIEDDEAEEMEALETEIMLALGYEDPYIAEKE.

The Zn(2+) site is built by His-114, His-118, and His-124.

The protein belongs to the endoribonuclease YbeY family. The cofactor is Zn(2+).

The protein localises to the cytoplasm. Functionally, single strand-specific metallo-endoribonuclease involved in late-stage 70S ribosome quality control and in maturation of the 3' terminus of the 16S rRNA. This Escherichia coli O17:K52:H18 (strain UMN026 / ExPEC) protein is Endoribonuclease YbeY.